Consider the following 205-residue polypeptide: UPF0316 protein Cthe_2213 (205 aa).

The next 3 membrane-spanning stretches (helical) occupy residues 15–37 (LPLL…IIFV), 44–64 (LAPV…SQIM), and 70–90 (FVCY…GIII).

The protein belongs to the UPF0316 family.

The protein resides in the cell membrane. The protein is UPF0316 protein Cthe_2213 of Acetivibrio thermocellus (strain ATCC 27405 / DSM 1237 / JCM 9322 / NBRC 103400 / NCIMB 10682 / NRRL B-4536 / VPI 7372) (Clostridium thermocellum).